A 210-amino-acid chain; its full sequence is Redox-sensing transcriptional repressor Rex (210 aa).

The H-T-H motif DNA-binding region spans 17-56; it reads KYHRYLYELLKNDVDRISSKELSEKIGFTASQIRQDLNCF. Position 91-96 (91-96) interacts with NAD(+); sequence GAGNIG.

This sequence belongs to the transcriptional regulatory Rex family. Homodimer.

It is found in the cytoplasm. Modulates transcription in response to changes in cellular NADH/NAD(+) redox state. This Clostridium botulinum (strain ATCC 19397 / Type A) protein is Redox-sensing transcriptional repressor Rex.